Reading from the N-terminus, the 452-residue chain is Exodeoxyribonuclease 7 large subunit (452 aa).

This sequence belongs to the XseA family. In terms of assembly, heterooligomer composed of large and small subunits.

The protein localises to the cytoplasm. The catalysed reaction is Exonucleolytic cleavage in either 5'- to 3'- or 3'- to 5'-direction to yield nucleoside 5'-phosphates.. Its function is as follows. Bidirectionally degrades single-stranded DNA into large acid-insoluble oligonucleotides, which are then degraded further into small acid-soluble oligonucleotides. The polypeptide is Exodeoxyribonuclease 7 large subunit (Bacillus cereus (strain ATCC 10987 / NRS 248)).